A 182-amino-acid chain; its full sequence is METTVKIKKSVLKRQKIAAAKEAAAKGAVKAHLNNVPTSTRKMRLVADLVRGQRVTLALGILKYQAKQGARKLEKLVLGSVADWQAKNSEARVEDADLYIREIFVDGGRVLKRLRTAPQGRAYRVRKRSNHITIVIDSLKELPAAPVAVVEEKEVVATAAAKPKATAKKATGEKSKAKTKAN.

Residues 159 to 182 form a disordered region; sequence AAAKPKATAKKATGEKSKAKTKAN.

This sequence belongs to the universal ribosomal protein uL22 family. In terms of assembly, part of the 50S ribosomal subunit.

Functionally, this protein binds specifically to 23S rRNA; its binding is stimulated by other ribosomal proteins, e.g. L4, L17, and L20. It is important during the early stages of 50S assembly. It makes multiple contacts with different domains of the 23S rRNA in the assembled 50S subunit and ribosome. In terms of biological role, the globular domain of the protein is located near the polypeptide exit tunnel on the outside of the subunit, while an extended beta-hairpin is found that lines the wall of the exit tunnel in the center of the 70S ribosome. The chain is Large ribosomal subunit protein uL22 from Cytophaga hutchinsonii (strain ATCC 33406 / DSM 1761 / CIP 103989 / NBRC 15051 / NCIMB 9469 / D465).